The sequence spans 165 residues: Disulfide bond formation protein B (165 aa).

Residues 1 to 11 are Cytoplasmic-facing; sequence MICSKVPVRAW. The helical transmembrane segment at 12-28 threads the bilayer; it reads FATLGLGCLGLVAVGMA. Over 29 to 46 the chain is Periplasmic; sequence LQTLLHLAPCPLCIFQRL. The cysteines at positions 38 and 41 are disulfide-linked. A helical membrane pass occupies residues 47 to 61; that stretch reads LYIMIGFVGLLGFVL. The Cytoplasmic portion of the chain corresponds to 62–66; it reads PAGRL. The helical transmembrane segment at 67–84 threads the bilayer; the sequence is LWSTLAAGLGVLGFGVAA. Residues 85–142 are Periplasmic-facing; sequence YQTWMQAFPDLAPECGFTDPNAIERLVDWLGMEWPSMFLATGFCTSRDWELLGLSMAN. Cysteine 99 and cysteine 128 form a disulfide bridge. The helical transmembrane segment at 143–161 threads the bilayer; the sequence is WSVLIFAGIVAYAVLLFVR. The Cytoplasmic segment spans residues 162 to 165; sequence KDRA.

Belongs to the DsbB family.

It localises to the cell inner membrane. Required for disulfide bond formation in some periplasmic proteins. Acts by oxidizing the DsbA protein. In Dechloromonas aromatica (strain RCB), this protein is Disulfide bond formation protein B.